Reading from the N-terminus, the 304-residue chain is Haloalkane dehalogenase (304 aa).

The AB hydrolase-1 domain maps to 42 to 154 (PIVFLHGNPT…DSVDLSPEFV (113 aa)). The Nucleophile role is filled by Asp-114. Glu-138 serves as the catalytic Proton donor. His-280 functions as the Proton acceptor in the catalytic mechanism.

This sequence belongs to the haloalkane dehalogenase family. Type 2 subfamily. Monomer.

It catalyses the reaction 1-haloalkane + H2O = a halide anion + a primary alcohol + H(+). In terms of biological role, catalyzes hydrolytic cleavage of carbon-halogen bonds in halogenated aliphatic compounds, leading to the formation of the corresponding primary alcohols, halide ions and protons. This chain is Haloalkane dehalogenase, found in Agrobacterium fabrum (strain C58 / ATCC 33970) (Agrobacterium tumefaciens (strain C58)).